The following is a 340-amino-acid chain: MAVQMEYEKDVKVPALDGKKIAVIGYGSQGHAHSQNLRDTGHDVIIGVRPGKSFDKAKEDGFDTYTVAEATKLADVIMILAPDEIQQELYEAEIAPNLEAGNAVGFAHGFNIHFEFIKVPADVDVFMCAPKGPGHLVRRTFEEGFGVPALYAVYQDATGNAKDIAMDWCKGIGAARVGLLETTYKEETEEDLFGEQAVLCGGLTALIETGFEVLTEAGYAPELAYFEVLHEMKLIVDLIYEGGFKKMRQSISNTAEFGDYVSGPRVITEQVKENMKAVLTDIQNGKFANDFVNDYKAGRPKLTAYREEAANLEIEKVGAELRKAMPFVGQNDDDAFKIYN.

The region spanning 3-182 (VQMEYEKDVK…GAARVGLLET (180 aa)) is the KARI N-terminal Rossmann domain. NADP(+) is bound by residues 26-29 (YGSQ), Arg49, Ser53, and 83-86 (DEIQ). His108 is an active-site residue. Gly134 is a binding site for NADP(+). Residues 183–328 (TYKEETEEDL…AELRKAMPFV (146 aa)) form the KARI C-terminal knotted domain. Residues Asp191, Glu195, Glu227, and Glu231 each contribute to the Mg(2+) site. Ser252 is a substrate binding site.

It belongs to the ketol-acid reductoisomerase family. It depends on Mg(2+) as a cofactor.

The enzyme catalyses (2R)-2,3-dihydroxy-3-methylbutanoate + NADP(+) = (2S)-2-acetolactate + NADPH + H(+). It catalyses the reaction (2R,3R)-2,3-dihydroxy-3-methylpentanoate + NADP(+) = (S)-2-ethyl-2-hydroxy-3-oxobutanoate + NADPH + H(+). It participates in amino-acid biosynthesis; L-isoleucine biosynthesis; L-isoleucine from 2-oxobutanoate: step 2/4. Its pathway is amino-acid biosynthesis; L-valine biosynthesis; L-valine from pyruvate: step 2/4. Its function is as follows. Involved in the biosynthesis of branched-chain amino acids (BCAA). Catalyzes an alkyl-migration followed by a ketol-acid reduction of (S)-2-acetolactate (S2AL) to yield (R)-2,3-dihydroxy-isovalerate. In the isomerase reaction, S2AL is rearranged via a Mg-dependent methyl migration to produce 3-hydroxy-3-methyl-2-ketobutyrate (HMKB). In the reductase reaction, this 2-ketoacid undergoes a metal-dependent reduction by NADPH to yield (R)-2,3-dihydroxy-isovalerate. The sequence is that of Ketol-acid reductoisomerase (NADP(+)) from Streptococcus thermophilus (strain CNRZ 1066).